Here is a 524-residue protein sequence, read N- to C-terminus: Indoleacetamide hydrolase (524 aa).

2 stretches are compositionally biased toward basic residues: residues M1–A26 and A34–K54. The tract at residues M1 to P56 is disordered. Residues K133 and S208 each act as charge relay system in the active site. Residue S232 is the Acyl-ester intermediate of the active site.

The protein belongs to the amidase family.

Its pathway is plant hormone metabolism; auxin biosynthesis. In terms of biological role, hydrolyzes indole-3-acetamide (IAM) into indole-3-acetic acid (IAA). The sequence is that of Indoleacetamide hydrolase (bam) from Bradyrhizobium diazoefficiens (strain JCM 10833 / BCRC 13528 / IAM 13628 / NBRC 14792 / USDA 110).